An 876-amino-acid chain; its full sequence is Nitrogen regulatory protein areA (876 aa).

Positions 1 to 11 (MSGLTLGGGSG) are enriched in gly residues. Disordered stretches follow at residues 1 to 65 (MSGL…PTDS), 137 to 159 (QERERAQQQARASSQKSPVPGMS), 192 to 248 (IPFS…ESEF), 393 to 413 (FSPPPSGYQSTASTPQPAYDG), 451 to 498 (YMYN…PNEF), and 573 to 672 (SADM…GPTT). Composition is skewed to polar residues over residues 198–211 (DHPSPSTTKASEAT), 399–408 (GYQSTASTPQ), and 455–480 (QGGSSQDITQQNAHMGAQSSSMQSPG). Residues 602–611 (VRNRDQDPRR) show a composition bias toward basic and acidic residues. A compositionally biased stretch (polar residues) spans 615-640 (ARTSSTPNTAQLLRQSMQNQSSHTSP). A GATA-type zinc finger spans residues 673–697 (CTNCFTQTTPLWRRNPEGQPLCNAC). Positions 721-742 (NRNSANSLAVGSSRVSKKSARK) form a DNA-binding region, H-T-H motif. Composition is skewed to polar residues over residues 724–734 (SANSLAVGSSR) and 742–766 (KNSVQQVTPTAPTSSRAQSNTTSES). The segment at 724–856 (SANSLAVGSS…MPPAAVNPAN (133 aa)) is disordered. Low complexity-rich tracts occupy residues 782-798 (PIAAAPPKSSSAATTSP) and 828-855 (SPSSTSSGGRSKVVPLAPAMPPAAVNPA).

In terms of assembly, interacts with nmrA.

The protein localises to the nucleus. Functionally, transcription activator that binds the consensus DNA element 5'-CGATAG-3' and mediates nitrogen metabolite repression. Activates the transcription of uapA. The sequence is that of Nitrogen regulatory protein areA (areA) from Emericella nidulans (strain FGSC A4 / ATCC 38163 / CBS 112.46 / NRRL 194 / M139) (Aspergillus nidulans).